Consider the following 231-residue polypeptide: 5'-methylthioadenosine/S-adenosylhomocysteine nucleosidase (231 aa).

E12 (proton acceptor) is an active-site residue. Substrate contacts are provided by residues G78, M153, and 174 to 175 (ME). The active-site Proton donor is D198.

Belongs to the PNP/UDP phosphorylase family. MtnN subfamily.

The enzyme catalyses S-adenosyl-L-homocysteine + H2O = S-(5-deoxy-D-ribos-5-yl)-L-homocysteine + adenine. It carries out the reaction S-methyl-5'-thioadenosine + H2O = 5-(methylsulfanyl)-D-ribose + adenine. It catalyses the reaction 5'-deoxyadenosine + H2O = 5-deoxy-D-ribose + adenine. It functions in the pathway amino-acid biosynthesis; L-methionine biosynthesis via salvage pathway; S-methyl-5-thio-alpha-D-ribose 1-phosphate from S-methyl-5'-thioadenosine (hydrolase route): step 1/2. Functionally, catalyzes the irreversible cleavage of the glycosidic bond in both 5'-methylthioadenosine (MTA) and S-adenosylhomocysteine (SAH/AdoHcy) to adenine and the corresponding thioribose, 5'-methylthioribose and S-ribosylhomocysteine, respectively. Also cleaves 5'-deoxyadenosine, a toxic by-product of radical S-adenosylmethionine (SAM) enzymes, into 5-deoxyribose and adenine. This is 5'-methylthioadenosine/S-adenosylhomocysteine nucleosidase from Bacillus anthracis (strain A0248).